A 164-amino-acid chain; its full sequence is Class I hydrophobin rodA (164 aa).

The N-terminal stretch at 1–18 is a signal peptide; it reads MQFSISALVLGLAATVYA. N50 carries an N-linked (GlcNAc...) asparagine glycan. 4 disulfide bridges follow: C60/C138, C68/C132, C69/C109, and C139/C157.

This sequence belongs to the fungal hydrophobin family. In terms of assembly, self-assembles to form functional amyloid fibrils called rodlets. Self-assembly into fibrillar rodlets occurs spontaneously at hydrophobic:hydrophilic interfaces and the rodlets further associate laterally to form amphipathic monolayers.

Its subcellular location is the secreted. It localises to the cell wall. Aerial growth, conidiation, and dispersal of filamentous fungi in the environment rely upon a capability of their secreting small amphipathic proteins called hydrophobins (HPBs) with low sequence identity. Class I can self-assemble into an outermost layer of rodlet bundles on aerial cell surfaces, conferring cellular hydrophobicity that supports fungal growth, development and dispersal; whereas Class II form highly ordered films at water-air interfaces through intermolecular interactions but contribute nothing to the rodlet structure. RodA is a class I hydrophobin involved in the cell surface hydrophobicity. The surface rodlet layer of the conidial cell wall makes airborne conidia of filamentous fungi inert to both innate and adaptive immunity. The polypeptide is Class I hydrophobin rodA (Penicillium camemberti (strain FM 013)).